A 509-amino-acid polypeptide reads, in one-letter code: Monofunctional riboflavin biosynthesis protein RIBA 3, chloroplastic (509 aa).

Residues 1-43 constitute a chloroplast transit peptide; it reads MMDSALYHPRIFFAHSFINGLYSSPRFANTCWRLVSRSSWEIK. Residues 44-302 form an inactive DHBP synthase region; that stretch reads ASENSDRNVF…LTDLIRYRRK (259 aa). Residues 125 to 126 and 240 to 244 each bind D-ribulose 5-phosphate; these read GD and RAGHT. The GTP cyclohydrolase II stretch occupies residues 303–509; it reads RDKLVERITV…ISDNNDQPLA (207 aa). A GTP-binding site is contributed by 353 to 357; the sequence is RVHSE. Zn(2+) is bound by residues Cys358, Cys369, and Cys371. Residues Gln374, 397–399, and Thr419 each bind GTP; that span reads EGR. Asp431 (proton acceptor; for GTP cyclohydrolase activity) is an active-site residue. The active-site Nucleophile; for GTP cyclohydrolase activity is Arg433. Residues Thr454 and Lys459 each contribute to the GTP site.

In the N-terminal section; belongs to the DHBP synthase family. The protein in the C-terminal section; belongs to the GTP cyclohydrolase II family. Zn(2+) serves as cofactor. Expressed in leaves, shoots, roots, flowers and siliques.

The protein localises to the plastid. Its subcellular location is the chloroplast. It catalyses the reaction GTP + 4 H2O = 2,5-diamino-6-hydroxy-4-(5-phosphoribosylamino)-pyrimidine + formate + 2 phosphate + 3 H(+). Its pathway is cofactor biosynthesis; riboflavin biosynthesis; 5-amino-6-(D-ribitylamino)uracil from GTP: step 1/4. In terms of biological role, involved in riboflavin biosynthesis. Catalyzes the conversion of GTP to 2,5-diamino-6-ribosylamino-4(3H)-pyrimidinone 5'-phosphate (DARP), formate and pyrophosphate. RIBA2 and RIBA3 together are not able to complement the loss of function of RIBA1. The sequence is that of Monofunctional riboflavin biosynthesis protein RIBA 3, chloroplastic (RIBA3) from Arabidopsis thaliana (Mouse-ear cress).